The sequence spans 177 residues: DELTA-stichotoxin-Hmg2b (177 aa).

Positions 3 to 12 (ALAGTIIAGA) are plays an important role in the hemolytic activity. An N-terminal region region spans residues 11 to 30 (GASLGFQILDKVLGELGKVS). Residues serine 54, valine 87, serine 105, proline 107, tyrosine 133, tyrosine 137, and tyrosine 138 each contribute to the phosphocholine site.

Belongs to the actinoporin family. Sea anemone subfamily. As to quaternary structure, octamer or nonamer in membranes. Monomer in the soluble state.

The protein resides in the secreted. It localises to the nematocyst. Its subcellular location is the target cell membrane. Pore-forming protein that forms cations-selective hydrophilic pores of around 1 nm and causes cytolysis. Pore formation is a multi-step process that involves specific recognition of membrane sphingomyelin (but neither cholesterol nor phosphatidylcholine) using aromatic rich region and adjacent phosphocholine (POC) binding site, firm binding to the membrane (mainly driven by hydrophobic interactions) accompanied by the transfer of the N-terminal region to the lipid-water interface and finally pore formation after oligomerization of monomers This toxin shows hemolytic activity. The polypeptide is DELTA-stichotoxin-Hmg2b (Heteractis magnifica (Magnificent sea anemone)).